A 144-amino-acid polypeptide reads, in one-letter code: Large ribosomal subunit protein uL11 (144 aa).

Belongs to the universal ribosomal protein uL11 family. As to quaternary structure, part of the ribosomal stalk of the 50S ribosomal subunit. Interacts with L10 and the large rRNA to form the base of the stalk. L10 forms an elongated spine to which L12 dimers bind in a sequential fashion forming a multimeric L10(L12)X complex. One or more lysine residues are methylated.

Functionally, forms part of the ribosomal stalk which helps the ribosome interact with GTP-bound translation factors. This is Large ribosomal subunit protein uL11 from Rhodococcus erythropolis (strain PR4 / NBRC 100887).